The sequence spans 279 residues: D-aminoacyl-tRNA deacylase (279 aa).

The tract at residues 81 to 100 (GRKSLTVHHPGNPTEDNSLG) is disordered.

It belongs to the DtdA deacylase family. As to quaternary structure, monomer. Zn(2+) serves as cofactor.

It catalyses the reaction a D-aminoacyl-tRNA + H2O = a tRNA + a D-alpha-amino acid + H(+). The enzyme catalyses glycyl-tRNA(Ala) + H2O = tRNA(Ala) + glycine + H(+). Functionally, D-aminoacyl-tRNA deacylase with broad substrate specificity. By recycling D-aminoacyl-tRNA to D-amino acids and free tRNA molecules, this enzyme counteracts the toxicity associated with the formation of D-aminoacyl-tRNA entities in vivo. The protein is D-aminoacyl-tRNA deacylase of Aeropyrum pernix (strain ATCC 700893 / DSM 11879 / JCM 9820 / NBRC 100138 / K1).